The following is a 3241-amino-acid chain: PHD finger protein rhinoceros (3241 aa).

The span at 1-16 shows a compositional bias: basic residues; that stretch reads MSQRGKRGNQQHHQSH. The disordered stretch occupies residues 1-126; that stretch reads MSQRGKRGNQ…GASSSSSWQA (126 aa). 2 stretches are compositionally biased toward low complexity: residues 42-55 and 90-126; these read PPNGATTAAVAEVT and RAAAGATSTSKSKSTKLAKSASKCKSQGASSSSSWQA. The segment at 312-362 adopts a PHD-type 1 zinc-finger fold; that stretch reads NVICDVCRSPDSEEANEMVFCDNCNICVHQACYGITAIPSGQWLCRTCSMG. The C2HC pre-PHD-type zinc finger occupies 364–398; it reads KPDCVLCPNKGGAMKSNKSGKHWAHVSCALWIPEV. Residues 422–481 form a PHD-type 2 zinc finger; that stretch reads LICVLCRKRVGSCIQCSVKPCKTAYHVTCAFQHGLEMRAIIEEGNAEDGVKLRSYCQKHS. Disordered regions lie at residues 482–501, 508–554, 737–1266, 1279–1483, 1500–1613, and 1632–1746; these read MSKGKKENAGSHGGGSASVA, NRYG…ARAQ, SGKQ…VATP, PQRQ…STKV, PKTN…SETR, and NLGA…QHLL. Residues 540–554 show a composition bias toward basic and acidic residues; the sequence is KTELTSEERNQARAQ. A compositionally biased stretch (polar residues) spans 762–777; that stretch reads KKLNNGILSSRTSSPE. The span at 807–874 shows a compositional bias: low complexity; that stretch reads KSSAAAATST…SGSSSAGSGV (68 aa). Basic and acidic residues predominate over residues 931–943; the sequence is ERCRNRQEPERGA. Positions 949 to 965 are enriched in polar residues; sequence QSKSVPNRSQASRSKPT. Over residues 995-1007 the composition is skewed to acidic residues; that stretch reads DADESVSSDESEE. A compositionally biased stretch (low complexity) spans 1019–1031; sequence STTTSGLATTGSA. Residues 1060 to 1075 are compositionally biased toward polar residues; the sequence is TVESNVSDSQNQQTIR. A compositionally biased stretch (low complexity) spans 1087 to 1104; it reads TAATTSSTSQAASSTSKA. 2 stretches are compositionally biased toward polar residues: residues 1117–1126 and 1151–1163; these read IGNSTKTKPN and NMRSTNLATTLQP. Basic and acidic residues predominate over residues 1184 to 1211; the sequence is KVKDSSSRVSNEADKSSLEKVRPKEHLQ. A compositionally biased stretch (polar residues) spans 1313-1327; it reads VTSATISGSGSSVPA. Threonine 1346 bears the Phosphothreonine mark. Serine 1352 bears the Phosphoserine mark. The residue at position 1364 (threonine 1364) is a Phosphothreonine. Positions 1382 to 1426 are enriched in low complexity; that stretch reads SSSSSGDSESSSSSSSSGSSSSSGGSDSDSESQASNSENPSSREP. At threonine 1456 the chain carries Phosphothreonine. The segment covering 1463 to 1483 has biased composition (polar residues); sequence NVLNIPSTRSRQNSTTKSTKV. The span at 1541 to 1558 shows a compositional bias: basic and acidic residues; sequence SPEKTVSRCKSRAEESPK. A compositionally biased stretch (polar residues) spans 1576 to 1594; the sequence is KGTSSLDKLLNKKQQQMNH. Pro residues predominate over residues 1599–1608; the sequence is TPPPISPTPP. Residues 1664-1675 show a composition bias toward polar residues; sequence TAPTRTQLSASA. Over residues 1688-1699 the composition is skewed to pro residues; that stretch reads PAAPLPASPTPT. Over residues 1717-1731 the composition is skewed to basic residues; it reads RRMRWRSRRRRRRRS. Coiled coils occupy residues 1741–1770 and 1893–1925; these read HTQHLLNEMEMARELEEERKNELLANASKY and SEEDSIQATRNLLEKLRKTKRKAQDDCSSKEAV. Disordered regions lie at residues 2037–2061, 2124–2148, 2203–2227, 2346–2454, 2598–2629, 2667–2691, 2768–2811, 2832–2911, 2964–3015, 3042–3169, and 3184–3241; these read LEKSPHQKGACPLSSNGGANVGQPA, AERRSSSPSSVSESNDPPQPPPVVT, NNTNTTQHQPTTPAHQQQQQRTPNN, TPPV…GGVT, ATGTGTSPSKQHSGPTALVAPPTGPNPTPAPN, SEEVSIDSDSTIPHSKTSTSDARSQ, NDDS…NSSS, GAGA…SVDE, NKRG…TTTM, KAET…EAAM, and VNVG…CEVR. Polar residues predominate over residues 2359–2381; that stretch reads KRTSVSGSNLSKKQTHKSPQLPQ. Residues 2392-2402 show a composition bias toward pro residues; it reads PLQPPTPPAPV. Residues 2430–2439 are compositionally biased toward gly residues; that stretch reads GSGGSGAPGR. 2 stretches are compositionally biased toward polar residues: residues 2598–2611 and 2673–2689; these read ATGTGTSPSKQHSG and DSDSTIPHSKTSTSDAR. The span at 2855–2865 shows a compositional bias: polar residues; the sequence is NNDNNGKTGAA. A compositionally biased stretch (basic and acidic residues) spans 2876–2887; the sequence is KTLESSEDDHQA. Phosphoserine is present on residues serine 2880 and serine 2881. The segment covering 2899–2911 has biased composition (polar residues); sequence ANETPSGVSSVDE. Over residues 2964-2974 the composition is skewed to basic and acidic residues; it reads NKRGVVVKDGE. The span at 2984–3002 shows a compositional bias: basic residues; that stretch reads KRPKSSKPKKEKKEKKRQK. A compositionally biased stretch (low complexity) spans 3003–3015; sequence QQQLILSSSTTTM. 2 positions are modified to phosphoserine: serine 3104 and serine 3110. 2 stretches are compositionally biased toward polar residues: residues 3115–3130 and 3184–3197; these read LLNSFTPHSQNANTSP and VNVGNYENSNNSLP. Over residues 3198-3218 the composition is skewed to low complexity; sequence SASGTGSASSNSCNSNSINNN. The segment covering 3219-3230 has biased composition (gly residues); the sequence is GSGGGRASGEGG.

Belongs to the JADE family.

Its subcellular location is the nucleus. In terms of biological role, may function as a negative regulator of the EGFR/Ras/MAPK signaling pathway during eye development. In Drosophila melanogaster (Fruit fly), this protein is PHD finger protein rhinoceros (rno).